The sequence spans 66 residues: Ejaculatory bulb-specific protein 2 (66 aa).

The N-terminal stretch at 1–20 is a signal peptide; that stretch reads MIRILVLMITFTLMTGSALC.

As to expression, specifically expressed in the ejaculatory bulb and seminal fluid.

It is found in the secreted. Functionally, protein component of the posterior mating plug. The polypeptide is Ejaculatory bulb-specific protein 2 (Drosophila melanogaster (Fruit fly)).